Reading from the N-terminus, the 448-residue chain is Probable glycine dehydrogenase (decarboxylating) subunit 1 (448 aa).

Belongs to the GcvP family. N-terminal subunit subfamily. In terms of assembly, the glycine cleavage system is composed of four proteins: P, T, L and H. In this organism, the P 'protein' is a heterodimer of two subunits.

It carries out the reaction N(6)-[(R)-lipoyl]-L-lysyl-[glycine-cleavage complex H protein] + glycine + H(+) = N(6)-[(R)-S(8)-aminomethyldihydrolipoyl]-L-lysyl-[glycine-cleavage complex H protein] + CO2. Functionally, the glycine cleavage system catalyzes the degradation of glycine. The P protein binds the alpha-amino group of glycine through its pyridoxal phosphate cofactor; CO(2) is released and the remaining methylamine moiety is then transferred to the lipoamide cofactor of the H protein. This chain is Probable glycine dehydrogenase (decarboxylating) subunit 1, found in Bacillus velezensis (strain DSM 23117 / BGSC 10A6 / LMG 26770 / FZB42) (Bacillus amyloliquefaciens subsp. plantarum).